The chain runs to 176 residues: Transcription factor E (176 aa).

Residues 8–90 (NDPVIQKYLH…LWTFHYENIP (83 aa)) form the HTH TFE/IIEalpha-type domain.

This sequence belongs to the TFE family. Monomer. Interaction with RNA polymerase subunits RpoF and RpoE is necessary for Tfe stimulatory transcription activity. Able to interact with Tbp and RNA polymerase in the absence of DNA promoter. Interacts both with the preinitiation and elongation complexes.

In terms of biological role, transcription factor that plays a role in the activation of archaeal genes transcribed by RNA polymerase. Facilitates transcription initiation by enhancing TATA-box recognition by TATA-box-binding protein (Tbp), and transcription factor B (Tfb) and RNA polymerase recruitment. Not absolutely required for transcription in vitro, but particularly important in cases where Tbp or Tfb function is not optimal. It dynamically alters the nucleic acid-binding properties of RNA polymerases by stabilizing the initiation complex and destabilizing elongation complexes. Seems to translocate with the RNA polymerase following initiation and acts by binding to the non template strand of the transcription bubble in elongation complexes. The chain is Transcription factor E from Haloquadratum walsbyi (strain DSM 16790 / HBSQ001).